Consider the following 832-residue polypeptide: MSDTDGKKTLGLRGGSRTGQVKQSFSHGRTKNVVVETKRKRVLVPKPGASASGGRGSDPKKPGNATDAEMERRLRALRAAKANESEEAERRAAEEKAREEERARRRAEIEAKEREEQEREERARQKAEEEEEARKKAEADASSKPAAARSKADDPATMDPAAAQAAEARGAGKTGSGPRKERTADRAQPRKEQKGKGDDRRRSGKLTLNQALSGDGGRQKSMAAMKRKQERERRKAMGGSQEREKIVRDVQLPETIVVQELANRMAERVADVVKALMKMGMMVTQNQSIDADTAELIIEEFGHKVVRVSDADVEDVIATVEDDPADMQPRPPVITVMGHVDHGKTSLLDAIRNAKVVAGEAGGITQHIGAYQVTTDDGTKLSFLDTPGHAAFTSMRARGAQVTDIVVLVVAADDAVMPQTIEAINHAKAAKVPMIVAINKIDRPEANPDKVRTDLLQHEVIVEKLSGDVQDVEVSAINGTGLDQLLESIALQAEILELKANPDRAAEGAVIEAQLDVGRGPVATVLVQKGTLRRGDIFVVGEQWGKVRALINDQGERVDEAGPSVPVEVLGLNGTPEAGDVLNVVETEAQAREIAEYRESAAKEKRAAAGAATTLEQLMAKAKSDETVAELPIVVKADVQGSAEAIVQTMEKIGNEEVRVRVLHSGVGAITESDIGLAEASGAPVFGFNVRANAPARNAAQQKGVEIRYYSIIYDLVDDVKAAASGLLSAEVRENFIGYAEIREVFKVSGVGKVAGCLVTDGIARRSAGVRLLRDNVVIHEGTLKTLKRFKDEVKEVQSGQECGMAFENYDDIRPGDVIEIFEREEVERNLE.

The interval 1–244 (MSDTDGKKTL…KAMGGSQERE (244 aa)) is disordered. The segment covering 18-27 (TGQVKQSFSH) has biased composition (polar residues). Basic and acidic residues predominate over residues 81–141 (KANESEEAER…EARKKAEADA (61 aa)). Low complexity predominate over residues 142-171 (SSKPAAARSKADDPATMDPAAAQAAEARGA). Composition is skewed to basic and acidic residues over residues 178–201 (PRKERTADRAQPRKEQKGKGDDRR) and 227–244 (RKQERERRKAMGGSQERE). One can recognise a tr-type G domain in the interval 329 to 497 (PRPPVITVMG…SIALQAEILE (169 aa)). Residues 338-345 (GHVDHGKT) form a G1 region. 338–345 (GHVDHGKT) serves as a coordination point for GTP. Positions 363–367 (GITQH) are G2. Residues 385–388 (DTPG) form a G3 region. GTP is bound by residues 385–389 (DTPGH) and 439–442 (NKID). Residues 439–442 (NKID) are G4. The interval 475-477 (SAI) is G5.

Belongs to the TRAFAC class translation factor GTPase superfamily. Classic translation factor GTPase family. IF-2 subfamily.

The protein resides in the cytoplasm. Functionally, one of the essential components for the initiation of protein synthesis. Protects formylmethionyl-tRNA from spontaneous hydrolysis and promotes its binding to the 30S ribosomal subunits. Also involved in the hydrolysis of GTP during the formation of the 70S ribosomal complex. This is Translation initiation factor IF-2 from Dinoroseobacter shibae (strain DSM 16493 / NCIMB 14021 / DFL 12).